The primary structure comprises 390 residues: MGCASSKNRNRCRNCKGGLSPVIVPRSYSMHVHHPAQHTGDSYHTVALTSSTIGSLSLCDSSLRHFHKHLEDSFYKQRVSDQMGEETLISGNGFLHGDEEKMNLDLQAKVIEAKVWSSTINEKIPKIVAKTPIVTPPGEPETINTWELMEGLEDVSPLRSPNHLRSFSFDFVRIQPSHDHDHDVAVSFDLPKSRFHENVKSSCRVDDLDPPDIVSRFKRKTLGKERVVLYFTSLRGIRKTYEDCCNIRIILKSLGIRIDERDVSMHSGFKDELKKLLEGKFNNGVGITLPRVFLGNKYLGGVEEIKKLNENGELEKLIKDCEMVEDGSPGFGNECEACGDVRFVPCETCSGSCKLYHEGEEEDEGVTEYGFQRCPYCNENGLIRCHVCCE.

The region spanning 215 to 325 is the Glutaredoxin domain; sequence SRFKRKTLGK…KLIKDCEMVE (111 aa).

This is an uncharacterized protein from Arabidopsis thaliana (Mouse-ear cress).